A 417-amino-acid chain; its full sequence is Phosphoglycerate kinase 1 (417 aa).

S2 is subject to N-acetylserine. Phosphoserine is present on residues S2 and S4. Residues 2-186 (SLSNKLTLDK…VGVNLPQKAG (185 aa)) form a globular domain-1 region. Residue K6 is modified to N6-succinyllysine. Residue K11 is modified to N6-acetyllysine. Residues V23, D24, F25, N26, Q38, and R39 each contribute to the (2R)-3-phosphoglycerate site. The tract at residues 38–43 (QRIKAA) is mitochondrial targeting region exposed following cis-trans isomerization by PIN1 and recognized by the TOM complex for mitochondrial translocation of the protein. The residue at position 48 (K48) is an N6-acetyllysine; alternate. K48 carries the post-translational modification N6-succinyllysine; alternate. (2R)-3-phosphoglycerate-binding residues include S62, H63, G65, and R66. The residue at position 75 (K75) is an N6-acetyllysine. At Y76 the chain carries Phosphotyrosine. 2 positions are modified to N6-acetyllysine: K86 and K91. At K97 the chain carries N6-acetyllysine; alternate. K97 carries the N6-(2-hydroxyisobutyryl)lysine; alternate modification. Residues L122 and R123 each coordinate (2R)-3-phosphoglycerate. At K131 the chain carries N6-acetyllysine; alternate. N6-malonyllysine; alternate is present on K131. Residue K146 is modified to N6-acetyllysine. Residues H170 and R171 each contribute to the (2R)-3-phosphoglycerate site. Residues 187-190 (GFLM) are linker. K191 carries the post-translational modification N6-succinyllysine. The tract at residues 191-417 (KKELNYFAKA…LPGVDALSNV (227 aa)) is globular domain-2. A Phosphotyrosine modification is found at Y196. The residue at position 199 (K199) is an N6-acetyllysine. S203 is subject to Phosphoserine. G214 is a binding site for ADP. G214 contacts CDP. Residues A215 and K216 each coordinate AMP. ATP is bound at residue A215. A215 contributes to the Mg(2+) binding site. K216 carries the post-translational modification N6-(2-hydroxyisobutyryl)lysine. The Mg(2+) site is built by A218 and D219. Residue D219 participates in CDP binding. K220 is an AMP binding site. An ATP-binding site is contributed by K220. K220 carries the post-translational modification N6-(2-hydroxyisobutyryl)lysine. G238 is an ADP binding site. Position 238 (G238) interacts with CDP. AMP is bound at residue G239. An ATP-binding site is contributed by G239. N6-acetyllysine is present on residues K267 and K291. G313 contacts AMP. G313 contributes to the ATP binding site. K323 is modified (N6-(2-hydroxyisobutyryl)lysine). G338, V340, and F343 together coordinate CDP. Residue F343 participates in ADP binding. AMP is bound at residue E344. Position 344 (E344) interacts with ATP. Residue K361 is modified to N6-acetyllysine. D375 and T376 together coordinate ATP. Position 375 (D375) interacts with Mg(2+). The interval 406 to 417 (KVLPGVDALSNV) is associated with globular domain 1.

The protein belongs to the phosphoglycerate kinase family. As to quaternary structure, monomer. Interacts with kinase MAPK1/ERK2; the interaction is direct, occurs under hypoxic conditions, and promotes its interaction with PIN1. Interacts with peptidyl-prolyl cis-trans isomerase PIN1; the interaction is direct, occurs under hypoxic conditions, and targets the protein to the mitochondrion by promoting interactions with the TOM complex. Interacts with mitochondrial circRNA mcPGK1 (via its 2nd stem-loop); the interaction is direct and targets the protein to the mitochondrion by promoting interactions with the TOM complex. Interacts with pyruvate dehydrogenase kinase PDK1; the interaction is direct, occurs under hypoxic conditions and leads to PDK1-mediated inhibition of pyruvate dehydrogenase complex activity. It depends on Mg(2+) as a cofactor. In terms of processing, phosphorylated at Ser-203 by MAPK1/ERK2 under hypoxic conditions, which promotes its mitochondrial targeting.

It is found in the cytoplasm. It localises to the cytosol. The protein resides in the mitochondrion matrix. It carries out the reaction (2R)-3-phosphoglycerate + ATP = (2R)-3-phospho-glyceroyl phosphate + ADP. The enzyme catalyses L-seryl-[protein] + ATP = O-phospho-L-seryl-[protein] + ADP + H(+). It participates in carbohydrate degradation; glycolysis; pyruvate from D-glyceraldehyde 3-phosphate: step 2/5. In terms of biological role, catalyzes one of the two ATP producing reactions in the glycolytic pathway via the reversible conversion of 1,3-diphosphoglycerate to 3-phosphoglycerate. Both L- and D- forms of purine and pyrimidine nucleotides can be used as substrates, but the activity is much lower on pyrimidines. In addition to its role as a glycolytic enzyme, it seems that PGK-1 acts as a polymerase alpha cofactor protein (primer recognition protein). Acts as a protein kinase when localized to the mitochondrion where it phosphorylates pyruvate dehydrogenase kinase PDK1 to inhibit pyruvate dehydrogenase complex activity and suppress the formation of acetyl-coenzyme A from pyruvate, and consequently inhibit oxidative phosphorylation and promote glycolysis. May play a role in sperm motility. This chain is Phosphoglycerate kinase 1 (PGK1), found in Equus caballus (Horse).